A 215-amino-acid chain; its full sequence is Adenylate kinase (215 aa).

10-15 (GTGKGT) contacts ATP. The NMP stretch occupies residues 30 to 59 (STGHILRKISTKKTLFGEKIKNIINSGKLV). Residues T31, R36, 57–59 (KLV), 85–88 (GFPR), and Q92 each bind AMP. Residues 122 to 157 (TRTINPITGTIYNNVIQKNSELKNLKINTLKSRLDD) form an LID region. ATP is bound by residues R123 and 132–133 (IY). Residues R154 and R165 each contribute to the AMP site. Residue N198 coordinates ATP.

Belongs to the adenylate kinase family. As to quaternary structure, monomer.

The protein resides in the cytoplasm. It catalyses the reaction AMP + ATP = 2 ADP. Its pathway is purine metabolism; AMP biosynthesis via salvage pathway; AMP from ADP: step 1/1. Functionally, catalyzes the reversible transfer of the terminal phosphate group between ATP and AMP. Plays an important role in cellular energy homeostasis and in adenine nucleotide metabolism. The polypeptide is Adenylate kinase (Buchnera aphidicola subsp. Baizongia pistaciae (strain Bp)).